Reading from the N-terminus, the 444-residue chain is Platelet-activating factor acetylhydrolase (444 aa).

An N-terminal signal peptide occupies residues 1 to 21 (MLPSKLHALFCLCTCLALVYP). Residues Asn-60 and Asn-200 are each glycosylated (N-linked (GlcNAc...) asparagine). The active-site Nucleophile is the Ser-274. Catalysis depends on charge relay system residues Asp-297 and His-352. Asn-424 and Asn-434 each carry an N-linked (GlcNAc...) asparagine glycan.

It belongs to the AB hydrolase superfamily. Lipase family. N-glycosylated. Plasma.

The protein resides in the secreted. Its subcellular location is the extracellular space. It catalyses the reaction a 1-O-alkyl-2-acetyl-sn-glycero-3-phosphocholine + H2O = a 1-O-alkyl-sn-glycero-3-phosphocholine + acetate + H(+). It carries out the reaction 1-O-decyl-2-acetyl-sn-glycero-3-phosphocholine + H2O = 1-O-decyl-sn-glycero-3-phosphocholine + acetate + H(+). The catalysed reaction is 1-O-dodecyl-2-acetyl-sn-glycero-3-phosphocholine + H2O = 1-O-dodecyl-sn-glycero-3-phosphocholine + acetate + H(+). The enzyme catalyses 1-O-tetradecyl-2-acetyl-sn-glycero-3-phosphocholine + H2O = 1-O-tetradecyl-sn-glycero-3-phosphocholine + acetate + H(+). It catalyses the reaction 1-O-hexadecyl-2-acetyl-sn-glycero-3-phosphocholine + H2O = 1-O-hexadecyl-sn-glycero-3-phosphocholine + acetate + H(+). It carries out the reaction 1-O-octadecyl-2-acetyl-sn-glycero-3-phosphocholine + H2O = 1-O-octadecyl-sn-glycero-3-phosphocholine + acetate + H(+). The catalysed reaction is 1-hexadecanoyl-2-acetyl-sn-glycero-3-phosphocholine + H2O = 1-hexadecanoyl-sn-glycero-3-phosphocholine + acetate + H(+). The enzyme catalyses 1-hexadecanoyl-2-propionyl-sn-glycero-3-phosphocholine + H2O = propanoate + 1-hexadecanoyl-sn-glycero-3-phosphocholine + H(+). It catalyses the reaction 1-hexadecanoyl-2-butanoyl-sn-glycero-3-phosphocholine + H2O = butanoate + 1-hexadecanoyl-sn-glycero-3-phosphocholine + H(+). It carries out the reaction 1-hexadecanoyl-2-pentanoyl-sn-glycero-3-phosphocholine + H2O = pentanoate + 1-hexadecanoyl-sn-glycero-3-phosphocholine + H(+). The catalysed reaction is 1-hexadecanoyl-2-glutaroyl-sn-glycero-3-phosphocholine + H2O = glutarate + 1-hexadecanoyl-sn-glycero-3-phosphocholine + H(+). The enzyme catalyses 1-hexadecanoyl-2-(5-oxopentanoyl)-sn-glycero-3-phosphocholine + H2O = 5-oxopentanoate + 1-hexadecanoyl-sn-glycero-3-phosphocholine + H(+). It catalyses the reaction 1-hexadecanoyl-2-(9-oxononanoyl)-sn-glycero-3-phosphocholine + H2O = 9-oxononanoate + 1-hexadecanoyl-sn-glycero-3-phosphocholine + H(+). It carries out the reaction 1-hexadecanoyl-2-[9-hydroperoxy-(10E-octadecenoyl)]-sn-glycero-3-phosphocholine + H2O = 9-hydroperoxy-10E-octadecenoate + 1-hexadecanoyl-sn-glycero-3-phosphocholine + H(+). The catalysed reaction is 1-hexadecanoyl-2-(10-hydroperoxy-8E-octadecenoyl)-sn-glycero-3-phosphocholine + H2O = 10-hydroperoxy-(8E)-octadecenoate + 1-hexadecanoyl-sn-glycero-3-phosphocholine + H(+). Lipoprotein-associated calcium-independent phospholipase A2 involved in phospholipid catabolism during inflammatory and oxidative stress response. At the lipid-aqueous interface, hydrolyzes the ester bond of fatty acyl group attached at sn-2 position of phospholipids (phospholipase A2 activity). Specifically targets phospholipids with a short-chain fatty acyl group at sn-2 position. Can hydrolyze phospholipids with long fatty acyl chains, only if they carry oxidized functional groups. Hydrolyzes and inactivates platelet-activating factor (PAF, 1-O-alkyl-2-acetyl-sn-glycero-3-phosphocholine), a potent pro-inflammatory signaling lipid that acts through PTAFR on various innate immune cells. Hydrolyzes oxidatively truncated phospholipids carrying an aldehyde group at omega position, preventing their accumulation in low-density lipoprotein (LDL) particles and uncontrolled pro-inflammatory effects. As part of high-density lipoprotein (HDL) particles, can hydrolyze phospholipids having long-chain fatty acyl hydroperoxides at sn-2 position and protect against potential accumulation of these oxylipins in the vascular wall. Catalyzes the release from membrane phospholipids of F2-isoprostanes, lipid biomarkers of cellular oxidative damage. This chain is Platelet-activating factor acetylhydrolase (PLA2G7), found in Bos taurus (Bovine).